The primary structure comprises 491 residues: MSLKSERRGIHVDQSDLLCKKGCGYYGNPAWQGFCSKCWREEYHKARQKQIQEDWELAERLQREEEEAFASSQSSQGAQSLTFSKFEEKKTNEKTRKVTTVKKFFSASSRVGSKKEIQEAKAPSPSINRQTSIETDRVSKEFIEFLKTFHKTGQEIYKQTKLFLEGMHYKRDLSIEEQSECAQDFYHNVAERMQTRGKVPPERVEKIMDQIEKYIMTRLYKYVFCPETTDDEKKDLAIQKRIRALRWVTPQMLCVPVNEDIPEVSDMVVKAITDIIEMDSKRVPRDKLACITKCSKHIFNAIKITKNEPASADDFLPTLIYIVLKGNPPRLQSNIQYITRFCNPSRLMTGEDGYYFTNLCCAVAFIEKLDAQSLNLSQEDFDRYMSGQTSPRKQEAESWSPDACLGVKQMYKNLDLLSQLNERQERIMNEAKKLEKDLIDWTDGIAREVQDIVEKYPLEIKPPNQPLAAIDSENVENDKLPPPLQPQVYAG.

Residues M1–S74 form an interaction with ubiquitinated proteins region. An A20-type zinc finger spans residues D13 to R47. Residues C19, C23, C35, and C38 each coordinate Zn(2+). The disordered stretch occupies residues E66–K85. Residues F69 to S84 show a composition bias toward low complexity. S124 and S132 each carry phosphoserine. An N6-acetyllysine mark is found at K151 and K170. The VPS9 domain maps to E232 to N375. Phosphoserine occurs at positions 373, 377, 390, and 400. The segment at P462–G491 is disordered.

In terms of assembly, interacts with RGS14; the interaction is GTP-dependent. Heterodimer with RABEP1. The heterodimer binds RAB4A and RAB5A that have been activated by GTP-binding. Interacts with RAB21, and with 100-fold lower affinity also with RAB22. Binds TSC2, GGA1, GGA2, GGA3, AP1G1 and AP1G2. Interacts with ubiquitinated EGFR. In terms of processing, monoubiquitinated.

It is found in the cytoplasm. It localises to the early endosome. The protein localises to the recycling endosome. Its function is as follows. Rab effector protein acting as linker between gamma-adaptin, RAB4A or RAB5A. Involved in endocytic membrane fusion and membrane trafficking of recycling endosomes. Stimulates nucleotide exchange on RAB5A. Can act as a ubiquitin ligase. This Homo sapiens (Human) protein is Rab5 GDP/GTP exchange factor (RABGEF1).